Reading from the N-terminus, the 740-residue chain is Elongation factor 2 (740 aa).

The tr-type G domain maps to A23–N264. GTP contacts are provided by residues A32–T39, D98–H102, and N152–D155. H605 is modified (diphthamide).

This sequence belongs to the TRAFAC class translation factor GTPase superfamily. Classic translation factor GTPase family. EF-G/EF-2 subfamily.

It localises to the cytoplasm. In terms of biological role, catalyzes the GTP-dependent ribosomal translocation step during translation elongation. During this step, the ribosome changes from the pre-translocational (PRE) to the post-translocational (POST) state as the newly formed A-site-bound peptidyl-tRNA and P-site-bound deacylated tRNA move to the P and E sites, respectively. Catalyzes the coordinated movement of the two tRNA molecules, the mRNA and conformational changes in the ribosome. This Pyrobaculum neutrophilum (strain DSM 2338 / JCM 9278 / NBRC 100436 / V24Sta) (Thermoproteus neutrophilus) protein is Elongation factor 2.